We begin with the raw amino-acid sequence, 3508 residues long: WD repeat and FYVE domain-containing protein 3 (3508 aa).

Residues Ser1942 and Ser2277 each carry the phosphoserine modification. 2 disordered regions span residues 2279-2303 and 2441-2504; these read FGLS…SPSP and SSEG…EKTD. Residues 2284–2963 are sufficient for translocalization to p62 bodies/ALIS; it reads LTGSRRNRKE…PHPPKRVRSR (680 aa). The span at 2450–2459 shows a compositional bias: basic and acidic residues; sequence EPEHGEDTIA. The residue at position 2474 (Ser2474) is a Phosphoserine. A BEACH-type PH domain is found at 2513–2638; it reads EEGEKIQHMY…IRNKVYQRFL (126 aa). The tract at residues 2568 to 3508 is interaction with SQSTM1; the sequence is MHEPIIPRGA…RGAEDGPRNC (941 aa). The BEACH domain occupies 2665-2958; sequence GLLSTLVGEK…QLFKKPHPPK (294 aa). The interval 2963–3508 is interaction with ATG5; it reads RLNGDNIGIS…RGAEDGPRNC (546 aa). 4 WD repeats span residues 3059–3097, 3107–3146, 3149–3188, and 3192–3236; these read SEWG…EKAK, GHTD…FLTQ, GHRA…VSVN, and GRSQ…VPET. The tract at residues 3254–3317 is disordered; the sequence is AQIGQQAQDD…SGSDDSRRWS (64 aa). Positions 3261 to 3272 are enriched in acidic residues; the sequence is QDDDSSDSETEE. Phosphoserine occurs at positions 3317 and 3321. Residues 3326 to 3331 carry the LIR motif; that stretch reads DGFIFV. A WD 5 repeat occupies 3390-3429; it reads THPAEVTALGVSKDHSRILVGDSRGRVFSWSVSDQPGRSA. The FYVE-type zinc finger occupies 3436–3496; sequence DEGGDSCSGC…VCQNCYYSLQ (61 aa). The Zn(2+) site is built by Cys3442, Cys3445, Cys3458, Cys3461, Cys3466, Cys3469, Cys3488, and Cys3491.

Directly interacts with ATG5 and associates with the ATG12-ATG5-ATG16L complex. Interacts with p62/SQSTM1. Directly interacts with GABARAP, GABARAPL1 and GABARAPL2; the interaction with GABARAP is required for WDFY3 recruitment to MAP1LC3B-positive p62/SQSTM1 bodies. Weakly interacts with MAP1LC3C; this interaction is direct. Does not interact with MAP1LC3A, nor MAP1LC3B. Interacts with TRAF6. In terms of tissue distribution, widely expressed, with high levels in the brain (at protein level). In the brain, expressed by both neuronal and non-neuronal cells. Expressed in bones, in the periosteum, cartilage, growth plate, trabeculae of the primary spongiosa, and scattered hematopoietic cells within the medullary cavity. Tends to be expressed at lower levels in the hypertrophic zone compared to trabeculae. Expressed in osteoblasts, osteoclasts and bone-marrow derived macrophages.

It localises to the nucleus. The protein localises to the cytoplasm. The protein resides in the cytosol. It is found in the PML body. Its subcellular location is the membrane. It localises to the perikaryon. The protein localises to the cell projection. The protein resides in the axon. Functionally, required for selective macroautophagy (aggrephagy). Acts as an adapter protein by linking specific proteins destined for degradation to the core autophagic machinery members, such as the ATG5-ATG12-ATG16L E3-like ligase, SQSTM1 and LC3. Involved in the formation and autophagic degradation of cytoplasmic ubiquitin-containing inclusions (p62 bodies, ALIS/aggresome-like induced structures). Important for normal brain development. Essential for the formation of axonal tracts throughout the brain and spinal cord, including the formation of the major forebrain commissures. Involved in the ability of neural cells to respond to guidance cues. Required for cortical neurons to respond to the trophic effects of netrin-1/NTN1. Regulates Wnt signaling through the removal of DVL3 aggregates, likely in an autophagy-dependent manner. This process may be important for the determination of brain size during embryonic development. May regulate osteoclastogenesis by acting on the TNFSF11/RANKL - TRAF6 pathway. After cytokinetic abscission, involved in midbody remnant degradation. In vitro strongly binds to phosphatidylinositol 3-phosphate (PtdIns3P). The protein is WD repeat and FYVE domain-containing protein 3 (Wdfy3) of Mus musculus (Mouse).